Consider the following 171-residue polypeptide: Endoribonuclease YbeY (171 aa).

Zn(2+) is bound by residues histidine 126, histidine 130, and histidine 136.

The protein belongs to the endoribonuclease YbeY family. The cofactor is Zn(2+).

The protein localises to the cytoplasm. Functionally, single strand-specific metallo-endoribonuclease involved in late-stage 70S ribosome quality control and in maturation of the 3' terminus of the 16S rRNA. This is Endoribonuclease YbeY from Rhizobium etli (strain ATCC 51251 / DSM 11541 / JCM 21823 / NBRC 15573 / CFN 42).